The chain runs to 298 residues: Protease HtpX homolog (298 aa).

The next 2 membrane-spanning stretches (helical) occupy residues 14 to 34 and 39 to 59; these read ILVM…IGYL and VIGG…VIIG. Position 144 (His-144) interacts with Zn(2+). The active site involves Glu-145. His-148 provides a ligand contact to Zn(2+). A run of 2 helical transmembrane segments spans residues 159–179 and 195–215; these read IALA…NFWW and IFAI…ATIA. Position 224 (Glu-224) interacts with Zn(2+).

Belongs to the peptidase M48B family. Zn(2+) is required as a cofactor.

It localises to the cell membrane. The sequence is that of Protease HtpX homolog from Limosilactobacillus reuteri (strain DSM 20016) (Lactobacillus reuteri).